The chain runs to 88 residues: MDKIKYRPIGMKAIRLLERRQYTFDVDVKATKTEVKRWIEGFFSVKVVGMNSHRPPKKKKRMGSVIGYPVRYKRMIVTLKVGDSIPLS.

It belongs to the universal ribosomal protein uL23 family. As to quaternary structure, part of the 50S ribosomal subunit.

Its subcellular location is the plastid. It localises to the chloroplast. Binds to 23S rRNA. The protein is Large ribosomal subunit protein uL23c (rpl23) of Spirogyra maxima (Green alga).